The sequence spans 133 residues: L-ectoine synthase (133 aa).

It belongs to the ectoine synthase family.

The enzyme catalyses (2S)-4-acetamido-2-aminobutanoate = L-ectoine + H2O. It participates in amine and polyamine biosynthesis; ectoine biosynthesis; L-ectoine from L-aspartate 4-semialdehyde: step 3/3. In terms of biological role, catalyzes the circularization of gamma-N-acetyl-alpha,gamma-diaminobutyric acid (ADABA) to ectoine (1,4,5,6-tetrahydro-2-methyl-4-pyrimidine carboxylic acid), which is an excellent osmoprotectant. This Bordetella petrii (strain ATCC BAA-461 / DSM 12804 / CCUG 43448) protein is L-ectoine synthase.